We begin with the raw amino-acid sequence, 157 residues long: Ribonuclease 8 (157 aa).

The N-terminal stretch at 1–30 is a signal peptide; the sequence is MAPARAGCCPLLLLLLLLLGLWVAEVLVSA. The active-site Proton acceptor is the histidine 45. 4 disulfide bridges follow: cysteine 53/cysteine 96, cysteine 67/cysteine 121, cysteine 85/cysteine 136, and cysteine 92/cysteine 99. Substrate contacts are provided by residues 68–72 and lysine 93; that span reads KDLNT. The active-site Proton donor is the histidine 152.

Belongs to the pancreatic ribonuclease family.

Its subcellular location is the secreted. Its function is as follows. Has a low ribonuclease activity. This chain is Ribonuclease 8 (RNASE8), found in Pan troglodytes (Chimpanzee).